We begin with the raw amino-acid sequence, 471 residues long: uncharacterized protein (471 aa).

The disordered stretch occupies residues 13–57 (KGGATIGATPMESDSSVSALSGSSASKVSRRGRRRSHLASKSSAP). Over residues 27-39 (SSVSALSGSSASK) the composition is skewed to low complexity. Residues 40–50 (VSRRGRRRSHL) show a composition bias toward basic residues. 2 CCHC-type zinc fingers span residues 397-414 (YACH…ECRQ) and 417-434 (SVCR…KCQN). A gag-like cysteine motif region spans residues 438 to 457 (CRNCRHRGQPSGHYMLSNAC).

This sequence to corresponding ORF of B.mori (R1BM).

This is an uncharacterized protein from Drosophila melanogaster (Fruit fly).